Here is a 565-residue protein sequence, read N- to C-terminus: Zinc finger protein 512 (565 aa).

The disordered stretch occupies residues 1–30; that stretch reads MSSRLGAVPATSGPTTFKQQRSTRIVGAKN. Residues 12–23 are compositionally biased toward polar residues; sequence SGPTTFKQQRST. Residues K18 and K83 each participate in a glycyl lysine isopeptide (Lys-Gly) (interchain with G-Cter in SUMO2) cross-link. The tract at residues 85–147 is disordered; the sequence is AATSHVEGSG…QARRIRKEPP (63 aa). A compositionally biased stretch (basic residues) spans 118 to 129; it reads KKHKLYGRKQRP. The segment at 196–219 adopts a C2H2-type 1 zinc-finger fold; that stretch reads FTCHHCGKQLRSLAGMKYHVMANH. A Glycyl lysine isopeptide (Lys-Gly) (interchain with G-Cter in SUMO2) cross-link involves residue K226. A C2H2-type 2 zinc finger spans residues 286–309; sequence LKCHHCGKPYRSKAGLAYHLRSEH. Residue K332 forms a Glycyl lysine isopeptide (Lys-Gly) (interchain with G-Cter in SUMO2) linkage. Residues 405–429 form a C2H2-type 3; atypical zinc finger; that stretch reads IQCPNQGCEAVYSSVSGLKAHLGSC. A C2H2-type 4 zinc finger spans residues 439 to 462; that stretch reads YKCLLCQKEFVSESGVKYHINSVH. Residues 484–493 are compositionally biased toward basic and acidic residues; that stretch reads KQRQQEEEKR. The disordered stretch occupies residues 484–565; that stretch reads KQRQQEEEKR…PKTNHKRGRK (82 aa). Residues 494-507 show a composition bias toward basic residues; the sequence is RQQHRSRRSLRRRQ. Residues 522 to 531 are compositionally biased toward basic and acidic residues; it reads VGKDQRRNEE. Positions 554 to 565 are enriched in basic residues; the sequence is KPPKTNHKRGRK.

The protein belongs to the krueppel C2H2-type zinc-finger protein family.

It is found in the nucleus. Functionally, may be involved in transcriptional regulation. In Macaca fascicularis (Crab-eating macaque), this protein is Zinc finger protein 512 (ZNF512).